The following is a 307-amino-acid chain: Elongation factor Ts (307 aa).

Residues 80 to 83 form an involved in Mg(2+) ion dislocation from EF-Tu region; the sequence is TDFV.

This sequence belongs to the EF-Ts family.

The protein localises to the cytoplasm. Its function is as follows. Associates with the EF-Tu.GDP complex and induces the exchange of GDP to GTP. It remains bound to the aminoacyl-tRNA.EF-Tu.GTP complex up to the GTP hydrolysis stage on the ribosome. The polypeptide is Elongation factor Ts (Rhodopseudomonas palustris (strain BisA53)).